The sequence spans 174 residues: Large ribosomal subunit protein uL10 (174 aa).

It belongs to the universal ribosomal protein uL10 family. As to quaternary structure, part of the ribosomal stalk of the 50S ribosomal subunit. The N-terminus interacts with L11 and the large rRNA to form the base of the stalk. The C-terminus forms an elongated spine to which L12 dimers bind in a sequential fashion forming a multimeric L10(L12)X complex.

Forms part of the ribosomal stalk, playing a central role in the interaction of the ribosome with GTP-bound translation factors. This chain is Large ribosomal subunit protein uL10, found in Anaeromyxobacter dehalogenans (strain 2CP-C).